A 324-amino-acid polypeptide reads, in one-letter code: Lactonase drp35 (324 aa).

Residues Glu47, Ser109, Gly111, Asp129, Thr132, Tyr134, Asp137, Asn184, Asp235, and Ser236 each contribute to the Ca(2+) site. Catalysis depends on Asp235, which acts as the Proton donor.

It belongs to the SMP-30/CGR1 family. Requires Ca(2+) as cofactor.

The protein localises to the cytoplasm. Its function is as follows. Exhibits lactonase activity. Acts in cells with perturbed membrane integrity and is possibly related to the membrane homeostasis. The chain is Lactonase drp35 (drp35) from Staphylococcus aureus (strain USA300).